A 57-amino-acid chain; its full sequence is UPF0391 membrane protein Arad_3976 (57 aa).

The next 2 membrane-spanning stretches (helical) occupy residues W4 to S24 and V33 to G53.

The protein belongs to the UPF0391 family.

It localises to the cell membrane. The polypeptide is UPF0391 membrane protein Arad_3976 (Rhizobium rhizogenes (strain K84 / ATCC BAA-868) (Agrobacterium radiobacter)).